The primary structure comprises 297 residues: Translational activator of cytochrome c oxidase 1 (297 aa).

A disordered region spans residues 20–45; it reads RGPGVRAAPPRDPRPSHPEPRGCGAA. Residues 28–39 are compositionally biased toward basic and acidic residues; sequence PPRDPRPSHPEP. The stretch at 191–227 forms a coiled coil; the sequence is VEVEDREKKAVNLERALEMAIEAGAEDVKETEDEEER.

It belongs to the TACO1 family.

It localises to the mitochondrion. Acts as a translational activator of mitochondrially-encoded cytochrome c oxidase 1. The sequence is that of Translational activator of cytochrome c oxidase 1 (TACO1) from Homo sapiens (Human).